A 361-amino-acid chain; its full sequence is Myricetin 3-O-methyltransferase 3 (361 aa).

D229 is an S-adenosyl-L-methionine binding site. Residue H267 is the Proton acceptor of the active site.

Belongs to the class I-like SAM-binding methyltransferase superfamily. Cation-independent O-methyltransferase family. As to quaternary structure, homodimer. As to expression, mainly expressed in leaves secreting glandular trichomes types 1 and 4 and, to a lesser extent, in storage trichomes type 6.

It carries out the reaction kaempferol + S-adenosyl-L-methionine = 3-O-methylkaempferol + S-adenosyl-L-homocysteine + H(+). It catalyses the reaction quercetin + S-adenosyl-L-methionine = 3',4',5,7-tetrahydroxy-3-methoxyflavone + S-adenosyl-L-homocysteine + H(+). The catalysed reaction is myricetin + S-adenosyl-L-methionine = 3-O-methylmyricetin + S-adenosyl-L-homocysteine + H(+). The enzyme catalyses kaempferide + S-adenosyl-L-methionine = 3,4'-O-dimethylkaempferol + S-adenosyl-L-homocysteine + H(+). It carries out the reaction isorhamnetin + S-adenosyl-L-methionine = 3,3'-O-dimethylquercetin + S-adenosyl-L-homocysteine + H(+). It catalyses the reaction rhamnetin + S-adenosyl-L-methionine = 3',4',5-trihydroxy-3,7-dimethoxyflavone + S-adenosyl-L-homocysteine + H(+). The catalysed reaction is laricitrin + S-adenosyl-L-methionine = 3,3'-O-dimethylmyricetin + S-adenosyl-L-homocysteine + H(+). The enzyme catalyses syringetin + S-adenosyl-L-methionine = 3,3',5'-O-trimethylmyricetin + S-adenosyl-L-homocysteine + H(+). Its pathway is flavonoid metabolism. Its function is as follows. Flavonoid 3-O-methyltransferase involved in the biosynthesis of polymethoxylated flavonoids natural products such as myricetin derivatives, aroma compounds possessing antioxidant properties and exhibiting pharmacological activities such as anti-carcinogen, anti-viral, anti-thrombotic, anti-diabetic, anti-atherosclerotic, and anti-inflammatory effects. Catalyzes S-adenosylmethionine-dependent regioselective 3-O-methylation of flavonoids; active on various hydroxylated flavonoid substrates. Active with myricetin, quercetin, kaempferol, 4'-methyl kaempferol (kaempferide), 3'-methyl quercetin (isorhamnetin), 7-methyl quercetin (rhamnetin), 3'-methyl myricetin (laricitrin) and 3',5'-dimethyl myricetin (syringetin), thus producing 3-methyl myricetin, 3-methyl quercetin, 3-methyl kaempferol, 4',3-methyl kaempferol, 3',3-methyl quercetin, 7,3-dimethyl quercetin, 3',3-dimethyl myricetin and 3',5',3-dimethyl myricetin, respectively. Inactive with flavonol substrates methylated at the 3-hydroxyl position such as 3-O-methyl quercetin. The protein is Myricetin 3-O-methyltransferase 3 of Solanum habrochaites (Wild tomato).